The following is a 321-amino-acid chain: MVKSVSLLRSQSYEAGSLLASLRTLLEPLGGMGNFVKPGDRVLLKPNLLTGNRPGRECITRPEVVAAVAQLVQEAGGKPFMGDSPAFGSARGVAENNGYLPLLQALDIPIVEFRGGRYATDSDSFNHLRLSKEAMDADVVINLPKLKSHAQLTMTMGVKNLFGCVPGKMKAWWHMEAGKDANRFGEMLVETAKAIAPDLSILDGIMAHEGNGPMHGDPREVGLLAASPDVFALDFVITDILQLDPATIPTMAAQERLGLNPTAAELTFPLSHPRELVVDNWKLPEVLMPIDFGLPRVLRSTFKHFYIRFVKEPLHIYTGKA.

Its subcellular location is the cellular thylakoid membrane. The sequence is that of Thylakoid-associated protein sll1697 from Synechocystis sp. (strain ATCC 27184 / PCC 6803 / Kazusa).